The primary structure comprises 353 residues: Lipase chaperone (353 aa).

The chain crosses the membrane as a helical span at residues 12-32 (IVLYLILGCVVVCGVWYSFDV).

The protein belongs to the lipase chaperone family.

The protein localises to the cell inner membrane. In terms of biological role, may be involved in the folding of the extracellular lipase during its passage through the periplasm. The protein is Lipase chaperone of Xylella fastidiosa (strain M23).